The following is a 170-amino-acid chain: Ribulose bisphosphate carboxylase small subunit, chloroplastic (170 aa).

2 transit peptides (chloroplast) span residues 1-46 and 1-47; these read MAPT…GRIR and MAPT…RIRC.

The protein belongs to the RuBisCO small chain family. Heterohexadecamer of 8 large and 8 small subunits.

It is found in the plastid. The protein localises to the chloroplast. Its function is as follows. RuBisCO catalyzes two reactions: the carboxylation of D-ribulose 1,5-bisphosphate, the primary event in carbon dioxide fixation, as well as the oxidative fragmentation of the pentose substrate. Both reactions occur simultaneously and in competition at the same active site. Although the small subunit is not catalytic it is essential for maximal activity. In Zea mays (Maize), this protein is Ribulose bisphosphate carboxylase small subunit, chloroplastic.